Consider the following 505-residue polypeptide: Deoxyguanosinetriphosphate triphosphohydrolase (505 aa).

In terms of domain architecture, HD spans 66–273 (RLTHSMEVQQ…MEAADDISYC (208 aa)).

The protein belongs to the dGTPase family. Type 1 subfamily. Homotetramer. The cofactor is Mg(2+).

It carries out the reaction dGTP + H2O = 2'-deoxyguanosine + triphosphate + H(+). Its function is as follows. dGTPase preferentially hydrolyzes dGTP over the other canonical NTPs. This is Deoxyguanosinetriphosphate triphosphohydrolase from Serratia proteamaculans (strain 568).